The primary structure comprises 299 residues: Probable lipid kinase YegS (299 aa).

Positions 2 to 133 (AEFPASLLIL…IDMAQVNKQT (132 aa)) constitute a DAGKc domain. ATP contacts are provided by residues Thr-40, 66-72 (GDGTINE), and Thr-95. Residues Leu-215, Asp-218, and Leu-220 each contribute to the Mg(2+) site. Glu-271 (proton acceptor) is an active-site residue.

Belongs to the diacylglycerol/lipid kinase family. YegS lipid kinase subfamily. Mg(2+) serves as cofactor. The cofactor is Ca(2+).

The protein localises to the cytoplasm. Its function is as follows. Probably phosphorylates lipids; the in vivo substrate is unknown. The polypeptide is Probable lipid kinase YegS (Escherichia coli O127:H6 (strain E2348/69 / EPEC)).